We begin with the raw amino-acid sequence, 110 residues long: MASLAALLPLLALLVLCRLDPAQAFVNQHLCGSHLVEALYLVCGERGFFYTPKSRREVEELQVGQAELGGGPGAGGLQPSALELALQKRGIVEQCCTSICSLYQLENYCN.

The N-terminal stretch at 1–24 (MASLAALLPLLALLVLCRLDPAQA) is a signal peptide. 3 cysteine pairs are disulfide-bonded: Cys-31–Cys-96, Cys-43–Cys-109, and Cys-95–Cys-100. A propeptide spans 57 to 87 (EVEELQVGQAELGGGPGAGGLQPSALELALQ) (c peptide).

Belongs to the insulin family. Heterodimer of a B chain and an A chain linked by two disulfide bonds.

It localises to the secreted. Its function is as follows. Insulin decreases blood glucose concentration. It increases cell permeability to monosaccharides, amino acids and fatty acids. It accelerates glycolysis, the pentose phosphate cycle, and glycogen synthesis in liver. This Oryctolagus cuniculus (Rabbit) protein is Insulin (INS).